The primary structure comprises 485 residues: Glycogen synthase (485 aa).

Residue lysine 15 coordinates ADP-alpha-D-glucose.

Belongs to the glycosyltransferase 1 family. Bacterial/plant glycogen synthase subfamily.

The catalysed reaction is [(1-&gt;4)-alpha-D-glucosyl](n) + ADP-alpha-D-glucose = [(1-&gt;4)-alpha-D-glucosyl](n+1) + ADP + H(+). It functions in the pathway glycan biosynthesis; glycogen biosynthesis. Its function is as follows. Synthesizes alpha-1,4-glucan chains using ADP-glucose. This chain is Glycogen synthase, found in Rhodospirillum rubrum (strain ATCC 11170 / ATH 1.1.1 / DSM 467 / LMG 4362 / NCIMB 8255 / S1).